Here is a 508-residue protein sequence, read N- to C-terminus: Aspartic proteinase yapsin-3 (508 aa).

The signal sequence occupies residues 1 to 20 (MKLQLAAVATLAVLTSPAFG). The propeptide occupies 21 to 47 (RVLPDGKYVKIPFTKKKNGDNGELSKR). Residues 63-394 (YSVELAIGTP…DLDNYEISLA (332 aa)) form the Peptidase A1 domain. An N-linked (GlcNAc...) asparagine glycan is attached at Asn-75. Asp-81 is an active-site residue. N-linked (GlcNAc...) asparagine glycosylation is found at Asn-120, Asn-160, Asn-163, and Asn-275. Asp-288 is a catalytic residue. 6 N-linked (GlcNAc...) asparagine glycosylation sites follow: Asn-309, Asn-328, Asn-367, Asn-422, Asn-445, and Asn-462. Residues 448 to 468 (STATTTRSTTTKKTNSTTTAK) show a composition bias toward low complexity. A disordered region spans residues 448-476 (STATTTRSTTTKKTNSTTTAKSTHKSKRA). Residue Asn-483 is the site of GPI-anchor amidated asparagine attachment. A propeptide spans 484-508 (SASSIRSTLGLLLVPSLLILSVFFS) (removed in mature form).

Belongs to the peptidase A1 family. Post-translationally, can also be processed to start at Phe-54.

The protein localises to the cell membrane. Cleaves proteins C-terminally to mono- and paired-basic residues. Required for cell wall integrity. The chain is Aspartic proteinase yapsin-3 (YPS3) from Saccharomyces cerevisiae (strain ATCC 204508 / S288c) (Baker's yeast).